Consider the following 254-residue polypeptide: Nickel import ATP-binding protein NikD (254 aa).

Positions 2–241 (PQQIELRNIT…PKHTVTRSLV (240 aa)) constitute an ABC transporter domain. 36–43 (GGSGSGKS) serves as a coordination point for ATP.

The protein belongs to the ABC transporter superfamily. Nickel importer (TC 3.A.1.5.3) family. In terms of assembly, the complex is composed of two ATP-binding proteins (NikD and NikE), two transmembrane proteins (NikB and NikC) and a solute-binding protein (NikA).

It localises to the cell inner membrane. It catalyses the reaction Ni(2+)(out) + ATP + H2O = Ni(2+)(in) + ADP + phosphate + H(+). Functionally, part of the ABC transporter complex NikABCDE involved in nickel import. Responsible for energy coupling to the transport system. In Shigella flexneri, this protein is Nickel import ATP-binding protein NikD.